The sequence spans 285 residues: Probable endonuclease 4 (285 aa).

9 residues coordinate Zn(2+): H69, H109, E145, D179, H182, H216, D229, H231, and E261.

The protein belongs to the AP endonuclease 2 family. Zn(2+) is required as a cofactor.

The catalysed reaction is Endonucleolytic cleavage to 5'-phosphooligonucleotide end-products.. In terms of biological role, endonuclease IV plays a role in DNA repair. It cleaves phosphodiester bonds at apurinic or apyrimidinic (AP) sites, generating a 3'-hydroxyl group and a 5'-terminal sugar phosphate. This is Probable endonuclease 4 from Salmonella heidelberg (strain SL476).